Here is a 109-residue protein sequence, read N- to C-terminus: uncharacterized protein (109 aa).

Residues serine 82–threonine 102 traverse the membrane as a helical segment.

The protein resides in the membrane. This is an uncharacterized protein from Saccharomyces cerevisiae (strain ATCC 204508 / S288c) (Baker's yeast).